A 187-amino-acid chain; its full sequence is Peptidyl-tRNA hydrolase (187 aa).

Tyr-14 lines the tRNA pocket. Residue His-19 is the Proton acceptor of the active site. Residues Tyr-64 and Asn-66 each coordinate tRNA.

It belongs to the PTH family. As to quaternary structure, monomer.

It localises to the cytoplasm. It catalyses the reaction an N-acyl-L-alpha-aminoacyl-tRNA + H2O = an N-acyl-L-amino acid + a tRNA + H(+). In terms of biological role, hydrolyzes ribosome-free peptidyl-tRNAs (with 1 or more amino acids incorporated), which drop off the ribosome during protein synthesis, or as a result of ribosome stalling. Catalyzes the release of premature peptidyl moieties from peptidyl-tRNA molecules trapped in stalled 50S ribosomal subunits, and thus maintains levels of free tRNAs and 50S ribosomes. This chain is Peptidyl-tRNA hydrolase, found in Carboxydothermus hydrogenoformans (strain ATCC BAA-161 / DSM 6008 / Z-2901).